The primary structure comprises 341 residues: MFVDKTLMITGGTGSFGNAVLSRFIESDIINDIKEIRIFSRDEKKQEDMRIALSNPKLKFYIGDVRNYKSVDEAMHGVDYVFHAAALKQVPTCEFYPMEAINTNVLGAENVLSAAIKNKVAKVVVLSTDKAVYPVNVMGLSKALMEKLAIAKARMRSMNETVLCVTRYGNVMASRGSVIPLFINQIKQGKELTITEPSMTRFLMSLVDSVNLVLYAFEHGRQGDIFVQKSPASTIAVLAKALQDIFGSKNKIRFIGTRHGEKHYESLVSSEDMAKAEDLGDYYRIPMDGRDLNYAKYFVEGEKKVALLDDYTSHNTRRLNLEEVKELLLTLNYVQEELKNA.

Belongs to the polysaccharide synthase family.

The enzyme catalyses UDP-alpha-D-glucose = UDP-alpha-D-galactose. Its function is as follows. Epimerizes UDP-galactose to UDP-glucose. The protein is UDP-glucose 4-epimerase (capD) of Rickettsia canadensis (strain McKiel).